The chain runs to 300 residues: Cytochrome f (300 aa).

The signal sequence occupies residues 1-32 (MMTYLSKQFSKLLFGQLLFLFIGNLLLKPVQA). Residues Y33, C53, C56, and H57 each coordinate heme. The helical transmembrane segment at 267–287 (LKTFIAFCVTVFIGQLAFVLK) threads the bilayer.

Belongs to the cytochrome f family. The 4 large subunits of the cytochrome b6-f complex are cytochrome b6, subunit IV (17 kDa polypeptide, petD), cytochrome f and the Rieske protein, while the 4 small subunits are PetG, PetL, PetM and PetN. The complex functions as a dimer. It depends on heme as a cofactor.

It localises to the plastid. It is found in the chloroplast thylakoid membrane. Its function is as follows. Component of the cytochrome b6-f complex, which mediates electron transfer between photosystem II (PSII) and photosystem I (PSI), cyclic electron flow around PSI, and state transitions. This Cyanidioschyzon merolae (strain NIES-3377 / 10D) (Unicellular red alga) protein is Cytochrome f.